The following is a 296-amino-acid chain: Bifunctional protein FolD (296 aa).

Residues 166–168, serine 191, and isoleucine 232 each bind NADP(+); that span reads GRS.

This sequence belongs to the tetrahydrofolate dehydrogenase/cyclohydrolase family. In terms of assembly, homodimer.

The enzyme catalyses (6R)-5,10-methylene-5,6,7,8-tetrahydrofolate + NADP(+) = (6R)-5,10-methenyltetrahydrofolate + NADPH. The catalysed reaction is (6R)-5,10-methenyltetrahydrofolate + H2O = (6R)-10-formyltetrahydrofolate + H(+). The protein operates within one-carbon metabolism; tetrahydrofolate interconversion. Its function is as follows. Catalyzes the oxidation of 5,10-methylenetetrahydrofolate to 5,10-methenyltetrahydrofolate and then the hydrolysis of 5,10-methenyltetrahydrofolate to 10-formyltetrahydrofolate. This is Bifunctional protein FolD from Cereibacter sphaeroides (strain ATCC 17025 / ATH 2.4.3) (Rhodobacter sphaeroides).